Consider the following 388-residue polypeptide: MAEKGITAPKGFVASATTAGIKASGNPDMALVVNQGPEFSAAAVFTRNRVFAAPVKVSRENVADGQIRAVLYNAGNANACNGLQGEKDARESVSHLAQNLGLEDSDIGVCSTGLIGELLPMDKLNAGIDQLTAEGALGDNGAAAAKAIMTTDTVDKETVVFADGWTVGGMGKGVGMMAPSLATMLVCLTTDASVTQEMAQIALANATAVTFDTLDIDGSTSTNDTVFLLASGASGITPTQDELNDAVYAACSDIAAKLQADAEGVTKRVAVTVVGTTNNEQAINAARTVARDNLFKCAMFGSDPNWGRVLAAVGMADADMEPEKISVFFNGQAVCLDSTGAPGAREVDLSGADIDVRIDLGTSGEGQATVRTTDLSFSYVEINSAYSS.

Positions 150, 172, 183, 263, 383, and 388 each coordinate substrate. Residue T183 is the Nucleophile of the active site.

The protein belongs to the ArgJ family. Heterotetramer of two alpha and two beta chains.

Its subcellular location is the cytoplasm. It catalyses the reaction N(2)-acetyl-L-ornithine + L-glutamate = N-acetyl-L-glutamate + L-ornithine. It carries out the reaction L-glutamate + acetyl-CoA = N-acetyl-L-glutamate + CoA + H(+). The protein operates within amino-acid biosynthesis; L-arginine biosynthesis; L-ornithine and N-acetyl-L-glutamate from L-glutamate and N(2)-acetyl-L-ornithine (cyclic): step 1/1. It participates in amino-acid biosynthesis; L-arginine biosynthesis; N(2)-acetyl-L-ornithine from L-glutamate: step 1/4. Functionally, catalyzes two activities which are involved in the cyclic version of arginine biosynthesis: the synthesis of N-acetylglutamate from glutamate and acetyl-CoA as the acetyl donor, and of ornithine by transacetylation between N(2)-acetylornithine and glutamate. In Corynebacterium glutamicum (strain ATCC 13032 / DSM 20300 / JCM 1318 / BCRC 11384 / CCUG 27702 / LMG 3730 / NBRC 12168 / NCIMB 10025 / NRRL B-2784 / 534), this protein is Arginine biosynthesis bifunctional protein ArgJ.